The sequence spans 269 residues: Tryptophan synthase alpha chain (269 aa).

Active-site proton acceptor residues include Glu-49 and Asp-60.

It belongs to the TrpA family. As to quaternary structure, tetramer of two alpha and two beta chains.

It carries out the reaction (1S,2R)-1-C-(indol-3-yl)glycerol 3-phosphate + L-serine = D-glyceraldehyde 3-phosphate + L-tryptophan + H2O. The protein operates within amino-acid biosynthesis; L-tryptophan biosynthesis; L-tryptophan from chorismate: step 5/5. Its function is as follows. The alpha subunit is responsible for the aldol cleavage of indoleglycerol phosphate to indole and glyceraldehyde 3-phosphate. The protein is Tryptophan synthase alpha chain of Actinobacillus pleuropneumoniae serotype 7 (strain AP76).